We begin with the raw amino-acid sequence, 427 residues long: Glucose-1-phosphate adenylyltransferase (427 aa).

Alpha-D-glucose 1-phosphate is bound by residues Tyr112, Gly177, 192-193 (EK), and Ser210.

The protein belongs to the bacterial/plant glucose-1-phosphate adenylyltransferase family. Homotetramer.

The enzyme catalyses alpha-D-glucose 1-phosphate + ATP + H(+) = ADP-alpha-D-glucose + diphosphate. The protein operates within glycan biosynthesis; glycogen biosynthesis. In terms of biological role, involved in the biosynthesis of ADP-glucose, a building block required for the elongation reactions to produce glycogen. Catalyzes the reaction between ATP and alpha-D-glucose 1-phosphate (G1P) to produce pyrophosphate and ADP-Glc. The chain is Glucose-1-phosphate adenylyltransferase from Methylobacillus flagellatus (strain ATCC 51484 / DSM 6875 / VKM B-1610 / KT).